A 172-amino-acid polypeptide reads, in one-letter code: Small ribosomal subunit protein uS5 (172 aa).

In terms of domain architecture, S5 DRBM spans 7–70 (VVEHLVNVNR…QNAKKYMIEV (64 aa)).

Belongs to the universal ribosomal protein uS5 family. In terms of assembly, part of the 30S ribosomal subunit. Contacts proteins S4 and S8.

Functionally, with S4 and S12 plays an important role in translational accuracy. In terms of biological role, located at the back of the 30S subunit body where it stabilizes the conformation of the head with respect to the body. In Orientia tsutsugamushi (strain Boryong) (Rickettsia tsutsugamushi), this protein is Small ribosomal subunit protein uS5.